The sequence spans 381 residues: MIRKIPSFIEVYKSLIQIPTISSNNKLLDQSNKNFIDLLSNYFSDLNFSVKNYQIPHTDKYNMLACVGSGNGGLLLSGHSDTVDFDEKKWTKDPFKLTETNNKFYGLGAVDMKGFFALILEVISSINIKKIIKPIYILATANEETDMSGAKNFIQSTIIKPDCIIIGEPTSLKLINAHKGHMSYSIKVIGDTGHSSNPDHGVNSIEIMHDVIRSLLILKKYFKEEYQHPNFSIPYPTMNLSSIHGGSAINRICPLCILNFEIRPIPGLTLTQIEIVIKEKLETIMKKWSHRIFIKKLFSSVPAYECPHNSGTIKIVEKLCQLNSAAVNYCTEAPFLQRIAPTLILGPGSIEQAHQPDEYLEHYFIQPTKNIITKLINKFCY.

His-79 lines the Zn(2+) pocket. The active site involves Asp-81. Asp-111 is a Zn(2+) binding site. Residue Glu-143 is part of the active site. Residues Glu-144, Glu-168, and His-354 each coordinate Zn(2+).

It belongs to the peptidase M20A family. ArgE subfamily. As to quaternary structure, homodimer. It depends on Zn(2+) as a cofactor. The cofactor is Co(2+). Glutathione serves as cofactor.

It is found in the cytoplasm. It carries out the reaction N(2)-acetyl-L-ornithine + H2O = L-ornithine + acetate. Its pathway is amino-acid biosynthesis; L-arginine biosynthesis; L-ornithine from N(2)-acetyl-L-ornithine (linear): step 1/1. In terms of biological role, catalyzes the hydrolysis of the amide bond of N(2)-acetylated L-amino acids. Cleaves the acetyl group from N-acetyl-L-ornithine to form L-ornithine, an intermediate in L-arginine biosynthesis pathway, and a branchpoint in the synthesis of polyamines. The polypeptide is Acetylornithine deacetylase (Buchnera aphidicola subsp. Acyrthosiphon pisum (strain 5A)).